The sequence spans 567 residues: Wee1-like protein kinase 2 (567 aa).

Basic and acidic residues-rich tracts occupy residues 1–12 and 26–36; these read MDDSSINKELKQ and EGQKEAPESRE. 2 disordered regions span residues 1 to 103 and 170 to 191; these read MDDS…DSRS and RSNGKRKTRGDLEEADPGEGKV. The residue at position 77 (S77) is a Phosphoserine. The short motif at 174 to 176 is the Nuclear localization signal element; it reads KRK. The Protein kinase domain maps to 215–494; that stretch reads FLEVEKIGVG…ARSRVLRPSL (280 aa). Residues 221 to 229 and K244 contribute to the ATP site; that span reads IGVGEFGTV. The Nuclear export signal motif lies at 318–332; sequence KLKDILLQISLGLKY. D342 (proton acceptor) is an active-site residue. Mg(2+)-binding residues include N347 and D384. Positions 497 to 523 form a coiled coil; it reads AEELQQQLNLEKSKTATLERELREAQQ. Residues 502–567 form a disordered region; that stretch reads QQLNLEKSKT…SSFTCGKSSP (66 aa). Over residues 507-520 the composition is skewed to basic and acidic residues; that stretch reads EKSKTATLERELRE. The segment covering 555 to 567 has biased composition (polar residues); it reads AKSSSFTCGKSSP.

The protein belongs to the protein kinase superfamily. Ser/Thr protein kinase family. WEE1 subfamily. Phosphorylation leads to increase its activity.

It is found in the nucleus. The enzyme catalyses L-tyrosyl-[protein] + ATP = O-phospho-L-tyrosyl-[protein] + ADP + H(+). Functionally, oocyte-specific protein tyrosine kinase that phosphorylates and inhibits CDK1 and acts as a key regulator of meiosis during both prophase I and metaphase II. Required to maintain meiotic arrest in oocytes during the germinal vesicle (GV) stage, a long period of quiescence at dictyate prophase I, by phosphorylating CDK1 at 'Tyr-15', leading to inhibit CDK1 activity and prevent meiotic reentry. Also required for metaphase II exit during egg activation by phosphorylating CDK1 at 'Tyr-15', to ensure exit from meiosis in oocytes and promote pronuclear formation. This is Wee1-like protein kinase 2 (WEE2) from Canis lupus familiaris (Dog).